The chain runs to 247 residues: Adenosylcobinamide-GDP ribazoletransferase (247 aa).

The next 5 membrane-spanning stretches (helical) occupy residues 34 to 54, 59 to 79, 113 to 133, 138 to 158, and 194 to 214; these read IITF…VFMV, CGVP…TGGF, GGLA…ELTL, ILAS…LLMY, and VLLP…AIFI.

The protein belongs to the CobS family. Mg(2+) is required as a cofactor.

It is found in the cell inner membrane. The enzyme catalyses alpha-ribazole + adenosylcob(III)inamide-GDP = adenosylcob(III)alamin + GMP + H(+). It catalyses the reaction alpha-ribazole 5'-phosphate + adenosylcob(III)inamide-GDP = adenosylcob(III)alamin 5'-phosphate + GMP + H(+). The protein operates within cofactor biosynthesis; adenosylcobalamin biosynthesis; adenosylcobalamin from cob(II)yrinate a,c-diamide: step 7/7. In terms of biological role, joins adenosylcobinamide-GDP and alpha-ribazole to generate adenosylcobalamin (Ado-cobalamin). Also synthesizes adenosylcobalamin 5'-phosphate from adenosylcobinamide-GDP and alpha-ribazole 5'-phosphate. This chain is Adenosylcobinamide-GDP ribazoletransferase, found in Escherichia coli O127:H6 (strain E2348/69 / EPEC).